The primary structure comprises 393 residues: NAD(P)H-quinone oxidoreductase subunit H, chloroplastic (393 aa).

This sequence belongs to the complex I 49 kDa subunit family. As to quaternary structure, NDH is composed of at least 16 different subunits, 5 of which are encoded in the nucleus.

Its subcellular location is the plastid. It is found in the chloroplast thylakoid membrane. The enzyme catalyses a plastoquinone + NADH + (n+1) H(+)(in) = a plastoquinol + NAD(+) + n H(+)(out). It catalyses the reaction a plastoquinone + NADPH + (n+1) H(+)(in) = a plastoquinol + NADP(+) + n H(+)(out). NDH shuttles electrons from NAD(P)H:plastoquinone, via FMN and iron-sulfur (Fe-S) centers, to quinones in the photosynthetic chain and possibly in a chloroplast respiratory chain. The immediate electron acceptor for the enzyme in this species is believed to be plastoquinone. Couples the redox reaction to proton translocation, and thus conserves the redox energy in a proton gradient. This chain is NAD(P)H-quinone oxidoreductase subunit H, chloroplastic, found in Cucumis sativus (Cucumber).